The chain runs to 362 residues: Methylthioribose-1-phosphate isomerase (362 aa).

Aspartate 252 acts as the Proton donor in catalysis.

The protein belongs to the eIF-2B alpha/beta/delta subunits family. MtnA subfamily.

The protein localises to the cytoplasm. It is found in the nucleus. The enzyme catalyses 5-(methylsulfanyl)-alpha-D-ribose 1-phosphate = 5-(methylsulfanyl)-D-ribulose 1-phosphate. It functions in the pathway amino-acid biosynthesis; L-methionine biosynthesis via salvage pathway; L-methionine from S-methyl-5-thio-alpha-D-ribose 1-phosphate: step 1/6. Functionally, catalyzes the interconversion of methylthioribose-1-phosphate (MTR-1-P) into methylthioribulose-1-phosphate (MTRu-1-P). The sequence is that of Methylthioribose-1-phosphate isomerase from Drosophila persimilis (Fruit fly).